A 368-amino-acid chain; its full sequence is tRNA-specific 2-thiouridylase MnmA (368 aa).

Residues 12–19 (GMSGGVDS) and Met38 contribute to the ATP site. The interval 98–100 (NPD) is interaction with target base in tRNA. The active-site Nucleophile is the Cys103. Cys103 and Cys200 are oxidised to a cystine. Residue Gly128 coordinates ATP. The tract at residues 150–152 (KDQ) is interaction with tRNA. The active-site Cysteine persulfide intermediate is the Cys200. Residues 313 to 314 (RY) are interaction with tRNA.

This sequence belongs to the MnmA/TRMU family. Interacts with TusE.

The protein resides in the cytoplasm. It carries out the reaction S-sulfanyl-L-cysteinyl-[protein] + uridine(34) in tRNA + AH2 + ATP = 2-thiouridine(34) in tRNA + L-cysteinyl-[protein] + A + AMP + diphosphate + H(+). Functionally, catalyzes the 2-thiolation of uridine at the wobble position (U34) of tRNA(Lys), tRNA(Glu) and tRNA(Gln), leading to the formation of s(2)U34, the first step of tRNA-mnm(5)s(2)U34 synthesis. Sulfur is provided by IscS, via a sulfur-relay system. Binds ATP and its substrate tRNAs. The polypeptide is tRNA-specific 2-thiouridylase MnmA (Pectobacterium atrosepticum (strain SCRI 1043 / ATCC BAA-672) (Erwinia carotovora subsp. atroseptica)).